Consider the following 265-residue polypeptide: Triosephosphate isomerase (265 aa).

Substrate is bound at residue 8 to 10; the sequence is NWK. The active-site Electrophile is His103. Glu182 functions as the Proton acceptor in the catalytic mechanism. Substrate-binding positions include Gly188, Ser226, and 247–248; that span reads GG.

It belongs to the triosephosphate isomerase family. As to quaternary structure, homodimer.

The protein localises to the cytoplasm. The catalysed reaction is D-glyceraldehyde 3-phosphate = dihydroxyacetone phosphate. The protein operates within carbohydrate biosynthesis; gluconeogenesis. It participates in carbohydrate degradation; glycolysis; D-glyceraldehyde 3-phosphate from glycerone phosphate: step 1/1. Functionally, involved in the gluconeogenesis. Catalyzes stereospecifically the conversion of dihydroxyacetone phosphate (DHAP) to D-glyceraldehyde-3-phosphate (G3P). This Psychrobacter sp. (strain PRwf-1) protein is Triosephosphate isomerase.